The sequence spans 350 residues: tRNA N6-adenosine threonylcarbamoyltransferase (350 aa).

2 residues coordinate Fe cation: His-117 and His-121. Residues Leu-140 to Gly-144, Asp-173, Gly-186, and Asn-277 each bind substrate. Asp-305 contributes to the Fe cation binding site.

It belongs to the KAE1 / TsaD family. It depends on Fe(2+) as a cofactor.

It is found in the cytoplasm. The enzyme catalyses L-threonylcarbamoyladenylate + adenosine(37) in tRNA = N(6)-L-threonylcarbamoyladenosine(37) in tRNA + AMP + H(+). Its function is as follows. Required for the formation of a threonylcarbamoyl group on adenosine at position 37 (t(6)A37) in tRNAs that read codons beginning with adenine. Is involved in the transfer of the threonylcarbamoyl moiety of threonylcarbamoyl-AMP (TC-AMP) to the N6 group of A37, together with TsaE and TsaB. TsaD likely plays a direct catalytic role in this reaction. In Novosphingobium aromaticivorans (strain ATCC 700278 / DSM 12444 / CCUG 56034 / CIP 105152 / NBRC 16084 / F199), this protein is tRNA N6-adenosine threonylcarbamoyltransferase.